The following is a 264-amino-acid chain: Thiazole synthase (264 aa).

The Schiff-base intermediate with DXP role is filled by Lys106. 1-deoxy-D-xylulose 5-phosphate-binding positions include Gly167, 193–194 (AG), and 215–216 (NS).

Belongs to the ThiG family. As to quaternary structure, homotetramer. Forms heterodimers with either ThiH or ThiS.

The protein localises to the cytoplasm. The enzyme catalyses [ThiS sulfur-carrier protein]-C-terminal-Gly-aminoethanethioate + 2-iminoacetate + 1-deoxy-D-xylulose 5-phosphate = [ThiS sulfur-carrier protein]-C-terminal Gly-Gly + 2-[(2R,5Z)-2-carboxy-4-methylthiazol-5(2H)-ylidene]ethyl phosphate + 2 H2O + H(+). Its pathway is cofactor biosynthesis; thiamine diphosphate biosynthesis. Its function is as follows. Catalyzes the rearrangement of 1-deoxy-D-xylulose 5-phosphate (DXP) to produce the thiazole phosphate moiety of thiamine. Sulfur is provided by the thiocarboxylate moiety of the carrier protein ThiS. In vitro, sulfur can be provided by H(2)S. The polypeptide is Thiazole synthase (Pseudomonas savastanoi pv. phaseolicola (strain 1448A / Race 6) (Pseudomonas syringae pv. phaseolicola (strain 1448A / Race 6))).